Here is a 212-residue protein sequence, read N- to C-terminus: Imidazole glycerol phosphate synthase subunit HisH (212 aa).

In terms of domain architecture, Glutamine amidotransferase type-1 spans 4–210 (NIGIIDYGMG…LKWLHEKNSD (207 aa)). Cys82 acts as the Nucleophile in catalysis. Catalysis depends on residues His185 and Glu187.

Heterodimer of HisH and HisF.

Its subcellular location is the cytoplasm. The enzyme catalyses 5-[(5-phospho-1-deoxy-D-ribulos-1-ylimino)methylamino]-1-(5-phospho-beta-D-ribosyl)imidazole-4-carboxamide + L-glutamine = D-erythro-1-(imidazol-4-yl)glycerol 3-phosphate + 5-amino-1-(5-phospho-beta-D-ribosyl)imidazole-4-carboxamide + L-glutamate + H(+). It carries out the reaction L-glutamine + H2O = L-glutamate + NH4(+). It functions in the pathway amino-acid biosynthesis; L-histidine biosynthesis; L-histidine from 5-phospho-alpha-D-ribose 1-diphosphate: step 5/9. IGPS catalyzes the conversion of PRFAR and glutamine to IGP, AICAR and glutamate. The HisH subunit catalyzes the hydrolysis of glutamine to glutamate and ammonia as part of the synthesis of IGP and AICAR. The resulting ammonia molecule is channeled to the active site of HisF. The chain is Imidazole glycerol phosphate synthase subunit HisH from Prochlorococcus marinus (strain MIT 9211).